A 295-amino-acid chain; its full sequence is Diaminopimelate epimerase (295 aa).

Residues N11 and N67 each contribute to the substrate site. C76 serves as the catalytic Proton donor. Substrate is bound by residues 77–78 (GN), N171, N210, and 228–229 (ER). C237 (proton acceptor) is an active-site residue. Position 238–239 (238–239 (GT)) interacts with substrate.

Belongs to the diaminopimelate epimerase family. In terms of assembly, homodimer.

It is found in the cytoplasm. The catalysed reaction is (2S,6S)-2,6-diaminopimelate = meso-2,6-diaminopimelate. The protein operates within amino-acid biosynthesis; L-lysine biosynthesis via DAP pathway; DL-2,6-diaminopimelate from LL-2,6-diaminopimelate: step 1/1. Its function is as follows. Catalyzes the stereoinversion of LL-2,6-diaminopimelate (L,L-DAP) to meso-diaminopimelate (meso-DAP), a precursor of L-lysine. In Methanocaldococcus jannaschii (strain ATCC 43067 / DSM 2661 / JAL-1 / JCM 10045 / NBRC 100440) (Methanococcus jannaschii), this protein is Diaminopimelate epimerase.